Here is a 592-residue protein sequence, read N- to C-terminus: LIM domain-binding protein 1 (592 aa).

Disordered stretches follow at residues 14–41 (GHPP…NSQN) and 305–368 (PAPE…NPMT). A compositionally biased stretch (polar residues) spans 23–41 (ESSNSHYGMPPSQGTNSQN). Positions 322–344 (PAANPRGSKKATAAAAAAAAAAT) are enriched in low complexity. Over residues 352 to 368 (PTASPANNQQFPPNPMT) the composition is skewed to polar residues. The region spanning 378-417 (DVMVVGEPSMMGSEFGENDERTISRVENSQYDPNAMQMQS) is the LIM interaction domain (LID) domain. 2 disordered regions span residues 437–458 (HHPG…MGSQ) and 559–592 (GGMQ…MITG). Pro residues predominate over residues 577-586 (GPPPQWPPPN).

It belongs to the LDB family. As to quaternary structure, interacts with blmp-1. Expressed in all neurons and some other tissues of the adult, including vulval muscle, and, in males, all the neurons of the tail region. Expressed in vulval cells.

Its function is as follows. Binds to the LIM domain of LIM domain-containing transcription factors. Required for the blmp-1-mediated transcriptional activation or repression of several hypodermal genes, such as bed-3. Regulates sam-10 nuclear localization in PLM neurons. Has a role in synaptic differentiation of PLM mechanosensory neurons. Involved in gonadogenesis. The polypeptide is LIM domain-binding protein 1 (Caenorhabditis elegans).